The chain runs to 362 residues: Phosphoserine aminotransferase (362 aa).

Residues Ser-9 and Arg-42 each contribute to the L-glutamate site. Pyridoxal 5'-phosphate-binding positions include 76-77, Trp-102, Thr-153, Asp-174, and Gln-197; that span reads GR. The residue at position 198 (Lys-198) is an N6-(pyridoxal phosphate)lysine. 239 to 240 lines the pyridoxal 5'-phosphate pocket; the sequence is NT.

This sequence belongs to the class-V pyridoxal-phosphate-dependent aminotransferase family. SerC subfamily. Homodimer. It depends on pyridoxal 5'-phosphate as a cofactor.

The protein localises to the cytoplasm. The catalysed reaction is O-phospho-L-serine + 2-oxoglutarate = 3-phosphooxypyruvate + L-glutamate. It catalyses the reaction 4-(phosphooxy)-L-threonine + 2-oxoglutarate = (R)-3-hydroxy-2-oxo-4-phosphooxybutanoate + L-glutamate. Its pathway is amino-acid biosynthesis; L-serine biosynthesis; L-serine from 3-phospho-D-glycerate: step 2/3. It functions in the pathway cofactor biosynthesis; pyridoxine 5'-phosphate biosynthesis; pyridoxine 5'-phosphate from D-erythrose 4-phosphate: step 3/5. Functionally, catalyzes the reversible conversion of 3-phosphohydroxypyruvate to phosphoserine and of 3-hydroxy-2-oxo-4-phosphonooxybutanoate to phosphohydroxythreonine. In Citrobacter koseri (strain ATCC BAA-895 / CDC 4225-83 / SGSC4696), this protein is Phosphoserine aminotransferase.